A 193-amino-acid chain; its full sequence is Dual-action ribosomal maturation protein DarP (193 aa).

It belongs to the DarP family.

The protein resides in the cytoplasm. In terms of biological role, member of a network of 50S ribosomal subunit biogenesis factors which assembles along the 30S-50S interface, preventing incorrect 23S rRNA structures from forming. Promotes peptidyl transferase center (PTC) maturation. The chain is Dual-action ribosomal maturation protein DarP from Vibrio cholerae serotype O1 (strain ATCC 39315 / El Tor Inaba N16961).